The primary structure comprises 138 residues: Large ribosomal subunit protein uL16 (138 aa).

Residues 1–13 (MLQPKRRKYRKEQ) are compositionally biased toward basic residues. The interval 1–20 (MLQPKRRKYRKEQKGRNTGI) is disordered.

The protein belongs to the universal ribosomal protein uL16 family. In terms of assembly, part of the 50S ribosomal subunit.

Its function is as follows. Binds 23S rRNA and is also seen to make contacts with the A and possibly P site tRNAs. The sequence is that of Large ribosomal subunit protein uL16 from Burkholderia mallei (strain NCTC 10247).